A 355-amino-acid chain; its full sequence is Peptide chain release factor 1 (355 aa).

An N5-methylglutamine modification is found at Gln-231.

The protein belongs to the prokaryotic/mitochondrial release factor family. Methylated by PrmC. Methylation increases the termination efficiency of RF1.

Its subcellular location is the cytoplasm. Peptide chain release factor 1 directs the termination of translation in response to the peptide chain termination codons UAG and UAA. The sequence is that of Peptide chain release factor 1 from Wolinella succinogenes (strain ATCC 29543 / DSM 1740 / CCUG 13145 / JCM 31913 / LMG 7466 / NCTC 11488 / FDC 602W) (Vibrio succinogenes).